Reading from the N-terminus, the 766-residue chain is Flocculation suppression protein (766 aa).

5 disordered regions span residues 1 to 52 (MSEE…HGSK), 129 to 181 (HDHS…PTKI), 203 to 247 (KRRA…SSNS), 547 to 619 (KPVP…SISG), and 657 to 766 (SVTP…KVKM). Composition is skewed to low complexity over residues 8 to 19 (SAPAPASTPAPA) and 134 to 147 (NDAN…TNDD). Residues 64–186 (IFIHKLYQIL…NPTKIWEFKH (123 aa)) mediate DNA binding. Basic and acidic residues predominate over residues 171–181 (QEKEKSNPTKI). Residues 208 to 224 (SRNNSSINSRKNSSNQN) show a composition bias toward low complexity. At serine 220 the chain carries Phosphoserine. Residues 236 to 247 (SSIQDPSTSSNS) are compositionally biased toward polar residues. The residue at position 556 (serine 556) is a Phosphoserine. The span at 679–699 (AVSSNLINSPMNVEHSSSLSQ) shows a compositional bias: polar residues. A compositionally biased stretch (low complexity) spans 708-719 (LPQPSLPTTSTT). Position 733 is a phosphoserine (serine 733). A compositionally biased stretch (polar residues) spans 738 to 750 (LLNQEDSSTSSAD).

This sequence in the N-terminal section; belongs to the HSF family.

It localises to the nucleus. Functionally, involved in cell surface assembly and regulation of the gene related to flocculation (asexual cell aggregation). Mutations in SFL1 causes constitutive cell aggregation. In Saccharomyces cerevisiae (strain ATCC 204508 / S288c) (Baker's yeast), this protein is Flocculation suppression protein (SFL1).